A 300-amino-acid polypeptide reads, in one-letter code: tRNA-cytidine(32) 2-sulfurtransferase (300 aa).

The short motif at 57 to 62 is the PP-loop motif element; sequence SGGKDS. Residues Cys-132, Cys-135, and Cys-223 each contribute to the [4Fe-4S] cluster site.

This sequence belongs to the TtcA family. Homodimer. Requires Mg(2+) as cofactor. [4Fe-4S] cluster serves as cofactor.

Its subcellular location is the cytoplasm. The enzyme catalyses cytidine(32) in tRNA + S-sulfanyl-L-cysteinyl-[cysteine desulfurase] + AH2 + ATP = 2-thiocytidine(32) in tRNA + L-cysteinyl-[cysteine desulfurase] + A + AMP + diphosphate + H(+). It functions in the pathway tRNA modification. In terms of biological role, catalyzes the ATP-dependent 2-thiolation of cytidine in position 32 of tRNA, to form 2-thiocytidine (s(2)C32). The sulfur atoms are provided by the cysteine/cysteine desulfurase (IscS) system. The sequence is that of tRNA-cytidine(32) 2-sulfurtransferase from Xanthomonas campestris pv. campestris (strain B100).